The primary structure comprises 105 residues: MAHNHNHDHNHEHQHEVITLVDENGNETLFEILLTIDGREEFGKNYVLLIPAGAEEDEQGEIEIQAYSFTENADGTEGDLQPIPEDSDAEWDMIEEVFNSFLDEE.

The protein belongs to the UPF0473 family.

This Streptococcus agalactiae serotype Ia (strain ATCC 27591 / A909 / CDC SS700) protein is UPF0473 protein SAK_2028.